The following is an 86-amino-acid chain: ADSVNGAKIFSANCASCHAGGKNLGVAQKTLKKADLEKYGAYSAMAIGAQVTNGKNAMPAFKGRLKPEEIXXVAAYVLGKAEAEWK.

Positions 14, 17, 18, and 58 each coordinate heme c.

Belongs to the cytochrome c family. PetJ subfamily. Monomer. Post-translationally, binds 1 heme c group covalently per subunit.

It is found in the cellular thylakoid lumen. In terms of biological role, functions as an electron carrier between membrane-bound cytochrome b6-f and photosystem I in oxygenic photosynthesis. This chain is Cytochrome c6 (petJ), found in Anabaena variabilis.